The chain runs to 374 residues: UDP-N-acetylglucosamine--N-acetylmuramyl-(pentapeptide) pyrophosphoryl-undecaprenol N-acetylglucosamine transferase (374 aa).

UDP-N-acetyl-alpha-D-glucosamine is bound by residues T10–G12, N124, R166, S196, and Q294.

The protein belongs to the glycosyltransferase 28 family. MurG subfamily.

It localises to the cell membrane. The enzyme catalyses di-trans,octa-cis-undecaprenyl diphospho-N-acetyl-alpha-D-muramoyl-L-alanyl-D-glutamyl-meso-2,6-diaminopimeloyl-D-alanyl-D-alanine + UDP-N-acetyl-alpha-D-glucosamine = di-trans,octa-cis-undecaprenyl diphospho-[N-acetyl-alpha-D-glucosaminyl-(1-&gt;4)]-N-acetyl-alpha-D-muramoyl-L-alanyl-D-glutamyl-meso-2,6-diaminopimeloyl-D-alanyl-D-alanine + UDP + H(+). It participates in cell wall biogenesis; peptidoglycan biosynthesis. Functionally, cell wall formation. Catalyzes the transfer of a GlcNAc subunit on undecaprenyl-pyrophosphoryl-MurNAc-pentapeptide (lipid intermediate I) to form undecaprenyl-pyrophosphoryl-MurNAc-(pentapeptide)GlcNAc (lipid intermediate II). This chain is UDP-N-acetylglucosamine--N-acetylmuramyl-(pentapeptide) pyrophosphoryl-undecaprenol N-acetylglucosamine transferase, found in Symbiobacterium thermophilum (strain DSM 24528 / JCM 14929 / IAM 14863 / T).